We begin with the raw amino-acid sequence, 206 residues long: Small ribosomal subunit protein uS4 (206 aa).

Residues Cys96–Val156 form the S4 RNA-binding domain.

It belongs to the universal ribosomal protein uS4 family. As to quaternary structure, part of the 30S ribosomal subunit. Contacts protein S5. The interaction surface between S4 and S5 is involved in control of translational fidelity.

Its function is as follows. One of the primary rRNA binding proteins, it binds directly to 16S rRNA where it nucleates assembly of the body of the 30S subunit. With S5 and S12 plays an important role in translational accuracy. This is Small ribosomal subunit protein uS4 from Pseudomonas fluorescens (strain ATCC BAA-477 / NRRL B-23932 / Pf-5).